The following is a 185-amino-acid chain: uncharacterized protein (185 aa).

Helical transmembrane passes span 9 to 29 (LVAAGLVLHIIQWIFILWAFL), 72 to 92 (VLFFALVLLIYGIVLHAILIV), and 111 to 131 (FFFIAAGVKLAILNITGIPFL).

The protein localises to the cell membrane. This is an uncharacterized protein from Bacillus subtilis (strain 168).